The sequence spans 527 residues: DNA damage-binding protein cmr1 (527 aa).

The disordered stretch occupies residues 35-90 (AGLFPPKSARSSPGGLTKPKKKPAPKKVKKEDEDLVPRRMSSRLRGLAADSEVAKR). Residues 52–62 (KPKKKPAPKKV) show a composition bias toward basic residues. 7 WD repeats span residues 185 to 226 (LTPE…PISA), 249 to 289 (PHTR…SVEK), 296 to 336 (SDDI…RSAV), 341 to 381 (LSEK…HDEP), 388 to 427 (VSRLSVSHAAFNSAGQIATSSYDDTLKIYDFGSKGIAAWK), 450 to 493 (GRWV…LAQL), and 496 to 527 (DGITAVPAVAVFHRSTNWIAGGTASGKICLWM). A disordered region spans residues 284-303 (TTSVEKYAPESTSDDIPISG).

Belongs to the WD repeat DDB2/WDR76 family.

Its function is as follows. DNA-binding protein that binds to both single- and double-stranded DNA. Binds preferentially to UV-damaged DNA. May be involved in DNA-metabolic processes. The polypeptide is DNA damage-binding protein cmr1 (Neosartorya fischeri (strain ATCC 1020 / DSM 3700 / CBS 544.65 / FGSC A1164 / JCM 1740 / NRRL 181 / WB 181) (Aspergillus fischerianus)).